The primary structure comprises 492 residues: 2,3-bisphosphoglycerate-independent phosphoglycerate mutase (492 aa).

Mn(2+) is bound by residues aspartate 11 and serine 61. The active-site Phosphoserine intermediate is serine 61. Substrate contacts are provided by residues histidine 118, 147 to 148 (RD), arginine 178, arginine 184, 248 to 251 (RNDR), and lysine 320. Mn(2+)-binding residues include aspartate 386, histidine 390, aspartate 427, histidine 428, and histidine 445.

The protein belongs to the BPG-independent phosphoglycerate mutase family. In terms of assembly, monomer. Requires Mn(2+) as cofactor.

It catalyses the reaction (2R)-2-phosphoglycerate = (2R)-3-phosphoglycerate. It participates in carbohydrate degradation; glycolysis; pyruvate from D-glyceraldehyde 3-phosphate: step 3/5. In terms of biological role, catalyzes the interconversion of 2-phosphoglycerate and 3-phosphoglycerate. In Campylobacter jejuni subsp. jejuni serotype O:2 (strain ATCC 700819 / NCTC 11168), this protein is 2,3-bisphosphoglycerate-independent phosphoglycerate mutase.